The following is a 151-amino-acid chain: Transcriptional regulator MraZ (151 aa).

SpoVT-AbrB domains follow at residues 5–52 (ANAV…PLDE) and 81–124 (AVDL…DEDA).

Belongs to the MraZ family. As to quaternary structure, forms oligomers.

The protein localises to the cytoplasm. It is found in the nucleoid. In Pseudomonas putida (strain ATCC 700007 / DSM 6899 / JCM 31910 / BCRC 17059 / LMG 24140 / F1), this protein is Transcriptional regulator MraZ.